Here is a 92-residue protein sequence, read N- to C-terminus: Small ribosomal subunit protein uS19c (92 aa).

The protein belongs to the universal ribosomal protein uS19 family.

It localises to the plastid. Its subcellular location is the chloroplast. Protein S19 forms a complex with S13 that binds strongly to the 16S ribosomal RNA. In Physcomitrium patens (Spreading-leaved earth moss), this protein is Small ribosomal subunit protein uS19c.